Here is a 127-residue protein sequence, read N- to C-terminus: Small ribosomal subunit protein uS13 (127 aa).

A disordered region spans residues 93–127; that stretch reads RQGLPVRGQRTRTNGRTRRGRRVTVAGKKKAPAKK. Positions 101-127 are enriched in basic residues; sequence QRTRTNGRTRRGRRVTVAGKKKAPAKK.

The protein belongs to the universal ribosomal protein uS13 family. In terms of assembly, part of the 30S ribosomal subunit. Forms a loose heterodimer with protein S19. Forms two bridges to the 50S subunit in the 70S ribosome.

Functionally, located at the top of the head of the 30S subunit, it contacts several helices of the 16S rRNA. In the 70S ribosome it contacts the 23S rRNA (bridge B1a) and protein L5 of the 50S subunit (bridge B1b), connecting the 2 subunits; these bridges are implicated in subunit movement. Contacts the tRNAs in the A and P-sites. This is Small ribosomal subunit protein uS13 from Crocosphaera subtropica (strain ATCC 51142 / BH68) (Cyanothece sp. (strain ATCC 51142)).